Here is a 377-residue protein sequence, read N- to C-terminus: 2-iminoacetate synthase (377 aa).

The region spanning 71-301 (NTVSFYVPLY…PEIELSLSTR (231 aa)) is the Radical SAM core domain. 3 residues coordinate [4Fe-4S] cluster: cysteine 85, cysteine 89, and cysteine 92.

The protein belongs to the radical SAM superfamily. ThiH family. Forms a heterodimer with ThiG. The cofactor is [4Fe-4S] cluster.

It carries out the reaction L-tyrosine + S-adenosyl-L-methionine + NADPH = 2-iminoacetate + 4-methylphenol + 5'-deoxyadenosine + L-methionine + NADP(+). Its pathway is cofactor biosynthesis; thiamine diphosphate biosynthesis. Functionally, catalyzes the radical-mediated cleavage of tyrosine to 2-iminoacetate and 4-cresol. The sequence is that of 2-iminoacetate synthase (thiH) from Escherichia coli (strain K12).